The sequence spans 518 residues: Glutamate--cysteine ligase (518 aa).

This sequence belongs to the glutamate--cysteine ligase type 1 family. Type 1 subfamily.

The enzyme catalyses L-cysteine + L-glutamate + ATP = gamma-L-glutamyl-L-cysteine + ADP + phosphate + H(+). It functions in the pathway sulfur metabolism; glutathione biosynthesis; glutathione from L-cysteine and L-glutamate: step 1/2. This is Glutamate--cysteine ligase from Shigella boydii serotype 18 (strain CDC 3083-94 / BS512).